We begin with the raw amino-acid sequence, 182 residues long: Adenine phosphoribosyltransferase (182 aa).

133–137 (ATGGS) provides a ligand contact to AMP.

Belongs to the purine/pyrimidine phosphoribosyltransferase family. As to quaternary structure, homodimer. Mg(2+) serves as cofactor.

The protein localises to the cytoplasm. It is found in the nucleus. The catalysed reaction is AMP + diphosphate = 5-phospho-alpha-D-ribose 1-diphosphate + adenine. The protein operates within purine metabolism; AMP biosynthesis via salvage pathway; AMP from adenine: step 1/1. Catalyzes a salvage reaction resulting in the formation of AMP, that is energically less costly than de novo synthesis. The sequence is that of Adenine phosphoribosyltransferase (APT1) from Yarrowia lipolytica (strain CLIB 122 / E 150) (Yeast).